Here is a 494-residue protein sequence, read N- to C-terminus: Protein nucleotidyltransferase YdiU (494 aa).

Positions 90, 92, 93, 113, 125, 126, 176, and 183 each coordinate ATP. The active-site Proton acceptor is the Asp-252. The Mg(2+) site is built by Asn-253 and Asp-262. Asp-262 contacts ATP.

Belongs to the SELO family. It depends on Mg(2+) as a cofactor. Mn(2+) serves as cofactor.

It carries out the reaction L-seryl-[protein] + ATP = 3-O-(5'-adenylyl)-L-seryl-[protein] + diphosphate. The enzyme catalyses L-threonyl-[protein] + ATP = 3-O-(5'-adenylyl)-L-threonyl-[protein] + diphosphate. The catalysed reaction is L-tyrosyl-[protein] + ATP = O-(5'-adenylyl)-L-tyrosyl-[protein] + diphosphate. It catalyses the reaction L-histidyl-[protein] + UTP = N(tele)-(5'-uridylyl)-L-histidyl-[protein] + diphosphate. It carries out the reaction L-seryl-[protein] + UTP = O-(5'-uridylyl)-L-seryl-[protein] + diphosphate. The enzyme catalyses L-tyrosyl-[protein] + UTP = O-(5'-uridylyl)-L-tyrosyl-[protein] + diphosphate. Functionally, nucleotidyltransferase involved in the post-translational modification of proteins. It can catalyze the addition of adenosine monophosphate (AMP) or uridine monophosphate (UMP) to a protein, resulting in modifications known as AMPylation and UMPylation. In Alkalilimnicola ehrlichii (strain ATCC BAA-1101 / DSM 17681 / MLHE-1), this protein is Protein nucleotidyltransferase YdiU.